The sequence spans 665 residues: F-box/WD repeat-containing protein lin-23 (665 aa).

The region spanning 81-127 (RDFISNLPAHLVELILFNVNSDSLKSCEEVSTSWRCALARGQHWKKL) is the F-box domain. WD repeat units lie at residues 220-257 (ENSK…CSRI), 260-299 (GHTG…KTLI), 301-337 (HCEA…DITI), 343-380 (GHRA…FVRT), 383-420 (GHRR…CLRV), 423-460 (GHEE…DPRA), and 472-509 (QHTG…PSGL). Residues 574-665 (AAAEAARGAG…VDEEMPDGGP (92 aa)) form a disordered region. Composition is skewed to acidic residues over residues 584–595 (DNDESSSEEDLD) and 655–665 (DVDEEMPDGGP).

As to quaternary structure, part of a SCF (SKP1-cullin-F-box) protein ligase complex.

The protein localises to the cytoplasm. Its function is as follows. Functions cell autonomously to negatively regulate cell cycle progression. Required to restrain cell proliferation in response to developmental cues. Probably recognizes and binds to some proteins and promotes their ubiquitination and degradation. The chain is F-box/WD repeat-containing protein lin-23 (lin-23) from Caenorhabditis elegans.